The following is a 235-amino-acid chain: Vinculin (235 aa).

This sequence belongs to the vinculin/alpha-catenin family. Exhibits self-association properties. Phosphorylated on serines, threonines and tyrosines. Post-translationally, acetylated by myristic acid and/or palmitic acid.

It localises to the cell membrane. Its subcellular location is the cell junction. It is found in the adherens junction. The protein resides in the focal adhesion. The protein localises to the cytoplasm. It localises to the cytoskeleton. Its subcellular location is the sarcolemma. It is found in the cell projection. The protein resides in the podosome. Involved in cell adhesion. May be involved in the attachment of the actin-based microfilaments to the plasma membrane. The protein is Vinculin (vcl) of Xenopus laevis (African clawed frog).